The chain runs to 239 residues: Proteasome activator complex subunit 2 (239 aa).

An N-acetylalanine modification is found at alanine 2. Position 10 is a phosphoserine (serine 10). Residues 65 to 86 (DIPIPDPPPKDDEMETDKQEKK) are disordered. The segment covering 72–86 (PPKDDEMETDKQEKK) has biased composition (basic and acidic residues).

This sequence belongs to the PA28 family. Heterodimer of PSME1 and PSME2, which forms a hexameric ring.

Its function is as follows. Implicated in immunoproteasome assembly and required for efficient antigen processing. The PA28 activator complex enhances the generation of class I binding peptides by altering the cleavage pattern of the proteasome. This Sus scrofa (Pig) protein is Proteasome activator complex subunit 2 (PSME2).